We begin with the raw amino-acid sequence, 450 residues long: Malate:quinone oxidoreductase (450 aa).

The protein belongs to the MQO family. Requires FAD as cofactor.

Its subcellular location is the cell membrane. The catalysed reaction is (S)-malate + a quinone = a quinol + oxaloacetate. It participates in carbohydrate metabolism; tricarboxylic acid cycle; oxaloacetate from (S)-malate (quinone route): step 1/1. Functionally, catalyzes oxidation of malate to oxaloacetate in the citric acid cycle. Donates electrons to quinones of the electron transfer chain. The chain is Malate:quinone oxidoreductase (mqo) from Helicobacter pylori (strain J99 / ATCC 700824) (Campylobacter pylori J99).